The following is a 457-amino-acid chain: Putative transposase y4bF (457 aa).

The Integrase catalytic domain maps to 128–313 (TFHQPRLRRE…RPLNLAPDRL (186 aa)). Residues 406 to 440 (QDERPAPKVRTNSEKNGYTPRGRKPGKRTDFMNDP) are disordered.

The polypeptide is Putative transposase y4bF (Sinorhizobium fredii (strain NBRC 101917 / NGR234)).